The following is a 309-amino-acid chain: Thioesterase lcsJ (309 aa).

Residues 11–31 form a helical membrane-spanning segment; that stretch reads IAQVHGFVFSWWGVILLLAII. The tract at residues 61-83 is disordered; sequence ASPTAENAQRRVPKTPKTGATDT. Asn-112 carries N-linked (GlcNAc...) asparagine glycosylation. The disordered stretch occupies residues 239-275; it reads SGWIPPRPESTGNSKSLDSLQANGHGATENGKHDAKD. A compositionally biased stretch (polar residues) spans 248-260; it reads STGNSKSLDSLQA.

Belongs to the lcsJ thioesterase family.

It localises to the membrane. The protein operates within secondary metabolite biosynthesis. Functionally, thioesterase; part of the gene cluster that mediates the biosynthesis of the lipopeptide antibiotics leucinostatins that show extensive biological activities, including antimalarial, antiviral, antibacterial, antifungal, and antitumor activities, as well as phytotoxic. Leucinostatin A contains nine amino acid residues, including the unusual amino acid 4-methyl-L-proline (MePro), 2-amino-6-hydroxy-4-methyl-8-oxodecanoic acid (AHyMeOA), 3-hydroxyleucine (HyLeu), alpha-aminoisobutyric acid (AIB), beta-Ala, a 4-methylhex-2-enoic acid at the N-terminus as well as a N1,N1-dimethylpropane-1,2-diamine (DPD) at the C-terminus. The biosynthesis of leucinostatins is probably initiated with the assembly of 4-methylhex-2-enoic acid by a reducing PKS. Two reducing polyketide synthases, lcsB and lcsC, have been identified in the cluster and it is not clear which is the one that assembles 4-methylhex-2-enoic acid since both contain KS, AT, DH, cMT, ER, KR and ACP domains. The polyketide residue might be transferred to the NRPS lcsA, mediated by two additional enzymes, the acyl-CoA ligase lcsD and the thioesterase lcsE. The linear polyketide carboxylic acid, which is released from PKS, is converted to a CoA thioester by lcsD, and then lcsE hydrolyzes the thiol bond and shuttles the polyketide intermediate to lcsA. The C domain of the first module catalyzed the condensation of 4-methylhex-2-enoic acid and MePro carried by domain A1, followed by successive condensations of nine amino acids to trigger the elongation of the linear peptide. A5 and A6 domains of lcsA are proposed to incorporate leucine, A2 AHyMeOA, and A3 incorporates HyLeu. A4, A7 and A8 incorporate AIB. The AHyMeOA in leucinostatin A activated by the A2 might be produced by the second PKS (lcsB or lcsC) present within the cluster. The MePro is probably produced via leucine cyclization and may originate from a separate pathway, independent of the cluster. Another nonproteinogenic amino acid, beta-Ala, could be produced by an aspartic acid decarboxylase also localized outside of the cluster. Two candidates are VFPBJ_01400 and VFPBJ_10476. The final peptide scaffold may be released by the NAD(P)H-dependent thioester reductase (TE) at the C-terminal region of lcsA. Transamination of the lcsA product by the transaminase lcsP may produce DPD at the C-terminus. Further hydroxylation steps performed alternatively by the cytochrome P450 monooxygenases lcsI, lcsK and lcsN then yield the non-methylated leucinostatins precursor. It is also possible that leucines can be hydroxylated prior to their incorporation into the peptide. Varying extents of methylation then lead to the formation of leucinostatins A and B. This chain is Thioesterase lcsJ, found in Purpureocillium lilacinum (Paecilomyces lilacinus).